Reading from the N-terminus, the 1132-residue chain is Myosin-binding protein C, fast-type (1132 aa).

The disordered stretch occupies residues 1 to 59 (MPEPSKAAPKKEAKKKEEKKEEKKEAPPPQEHKDEAPDDVHPPETPDPEGLFLSKPQNV). Residues 9 to 44 (PKKEAKKKEEKKEEKKEAPPPQEHKDEAPDDVHPPE) are compositionally biased toward basic and acidic residues. Ig-like C2-type domains follow at residues 48–149 (PEGL…SIDV), 249–338 (SEAF…VKEP), 339–429 (PVTV…VEEK), 430–530 (QLEV…KQEP), and 531–630 (PKIH…VVDV). Fibronectin type-III domains follow at residues 633 to 729 (PPQS…IAPT) and 731 to 826 (EPTH…IREI). One can recognise an Ig-like C2-type 6 domain in the interval 830-923 (PKIRLPRHLR…ATLRLRVVER (94 aa)). The 97-residue stretch at 926 to 1022 (PPQAVRVMEV…HNTARIAKEG (97 aa)) folds into the Fibronectin type-III 3 domain. Residues 1039–1132 (PQFLTPLVDR…ECRLDVRVPQ (94 aa)) form the Ig-like C2-type 7 domain.

Belongs to the immunoglobulin superfamily. MyBP family.

Functionally, thick filament-associated protein located in the crossbridge region of vertebrate striated muscle a bands. In vitro it binds MHC, F-actin and native thin filaments, and modifies the activity of actin-activated myosin ATPase. It may modulate muscle contraction or may play a more structural role. The sequence is that of Myosin-binding protein C, fast-type (MYBPC2) from Gallus gallus (Chicken).